A 315-amino-acid chain; its full sequence is tRNA dimethylallyltransferase (315 aa).

13 to 20 (GPTASGKT) serves as a coordination point for ATP. 15-20 (TASGKT) lines the substrate pocket. Interaction with substrate tRNA regions lie at residues 38-41 (DSAL), 162-166 (QRIQR), and 245-250 (RCVGYR).

It belongs to the IPP transferase family. In terms of assembly, monomer. Mg(2+) serves as cofactor.

The catalysed reaction is adenosine(37) in tRNA + dimethylallyl diphosphate = N(6)-dimethylallyladenosine(37) in tRNA + diphosphate. Its function is as follows. Catalyzes the transfer of a dimethylallyl group onto the adenine at position 37 in tRNAs that read codons beginning with uridine, leading to the formation of N6-(dimethylallyl)adenosine (i(6)A). This Methylobacillus flagellatus (strain ATCC 51484 / DSM 6875 / VKM B-1610 / KT) protein is tRNA dimethylallyltransferase.